Reading from the N-terminus, the 195-residue chain is Interferon tau (195 aa).

A signal peptide spans 1–23 (MAFVLSLLMALVLASYSPGGSLG). Cystine bridges form between Cys24/Cys122 and Cys52/Cys162.

This sequence belongs to the alpha/beta interferon family. IFN-alphaII subfamily. As to expression, constitutively and exclusively expressed in the mononuclear cells of the extraembryonic trophectoderm.

It is found in the secreted. Paracrine hormone primarily responsible for maternal recognition of pregnancy. Interacts with endometrial receptors, probably type I interferon receptors, and blocks estrogen receptor expression, preventing the estrogen-induced increase in oxytocin receptor expression in the endometrium. This results in the suppression of the pulsatile endometrial release of the luteolytic hormone prostaglandin F2-alpha, hindering the regression of the corpus luteum (luteolysis) and therefore a return to ovarian cyclicity. This, and a possible direct effect of IFN-tau on prostaglandin synthesis, leads in turn to continued ovarian progesterone secretion, which stimulates the secretion by the endometrium of the nutrients required for the growth of the conceptus. In summary, displays particularly high antiviral and antiproliferative potency concurrently with particular weak cytotoxicity, high antiluteolytic activity and immunomodulatory properties. In contrast with other IFNs, IFN-tau is not virally inducible. In Cervus elaphus (Red deer), this protein is Interferon tau (IFNT).